Consider the following 220-residue polypeptide: Orotidine 5'-phosphate decarboxylase (220 aa).

Substrate is bound by residues Asp-12, Lys-34, 60 to 69 (DFKVADIPNT), Ser-117, 170 to 180 (PGVGAQGGKAS), Gly-193, and Arg-194. Lys-62 functions as the Proton donor in the catalytic mechanism.

It belongs to the OMP decarboxylase family. Type 1 subfamily. As to quaternary structure, homodimer.

The catalysed reaction is orotidine 5'-phosphate + H(+) = UMP + CO2. It participates in pyrimidine metabolism; UMP biosynthesis via de novo pathway; UMP from orotate: step 2/2. Its function is as follows. Catalyzes the decarboxylation of orotidine 5'-monophosphate (OMP) to uridine 5'-monophosphate (UMP). In Methanosarcina mazei (strain ATCC BAA-159 / DSM 3647 / Goe1 / Go1 / JCM 11833 / OCM 88) (Methanosarcina frisia), this protein is Orotidine 5'-phosphate decarboxylase.